Reading from the N-terminus, the 512-residue chain is Maturase K (512 aa).

This sequence belongs to the intron maturase 2 family. MatK subfamily.

It localises to the plastid. It is found in the chloroplast. Usually encoded in the trnK tRNA gene intron. Probably assists in splicing its own and other chloroplast group II introns. The chain is Maturase K from Oenothera parviflora (Small-flowered evening primrose).